The following is a 177-amino-acid chain: Large ribosomal subunit protein uL10 (177 aa).

Belongs to the universal ribosomal protein uL10 family. In terms of assembly, part of the ribosomal stalk of the 50S ribosomal subunit. The N-terminus interacts with L11 and the large rRNA to form the base of the stalk. The C-terminus forms an elongated spine to which L12 dimers bind in a sequential fashion forming a multimeric L10(L12)X complex.

Forms part of the ribosomal stalk, playing a central role in the interaction of the ribosome with GTP-bound translation factors. This chain is Large ribosomal subunit protein uL10, found in Mycobacterium leprae (strain Br4923).